The primary structure comprises 433 residues: 26S proteasome regulatory subunit 7 (433 aa).

Positions 1–23 are disordered; that stretch reads MPDYLGADQRKTKEEEKEDKPIR. Positions 8–23 are enriched in basic and acidic residues; that stretch reads DQRKTKEEEKEDKPIR. 216-223 provides a ligand contact to ATP; it reads GPPGTGKT.

It belongs to the AAA ATPase family. In terms of processing, phosphorylated. Dephosphorylated by ublcp1 which impairs psmc2 ATPase activity and disrupts 26S proteasome assembly.

Its subcellular location is the cytoplasm. It localises to the nucleus. The 26S proteasome is involved in the ATP-dependent degradation of ubiquitinated proteins. The regulatory (or ATPase) complex confers ATP dependency and substrate specificity to the 26S complex. The chain is 26S proteasome regulatory subunit 7 (psmc2) from Xenopus laevis (African clawed frog).